The chain runs to 549 residues: Probable protein kinase UbiB (549 aa).

A Protein kinase domain is found at 123–501 (DFDDVPLASA…QHKAHKSNYL (379 aa)). Residues 129–137 (LASASIAQV) and Lys152 each bind ATP. The active-site Proton acceptor is Asp287. 2 helical membrane passes run 498 to 517 (SNYL…ILFT) and 521 to 540 (TLWA…LLGW).

Belongs to the ABC1 family. UbiB subfamily.

Its subcellular location is the cell inner membrane. The protein operates within cofactor biosynthesis; ubiquinone biosynthesis [regulation]. In terms of biological role, is probably a protein kinase regulator of UbiI activity which is involved in aerobic coenzyme Q (ubiquinone) biosynthesis. In Shewanella denitrificans (strain OS217 / ATCC BAA-1090 / DSM 15013), this protein is Probable protein kinase UbiB.